Here is a 152-residue protein sequence, read N- to C-terminus: Deoxyuridine 5'-triphosphate nucleotidohydrolase (152 aa).

Residues 71–73, asparagine 84, 88–90, and methionine 98 contribute to the substrate site; these read RSG and LID.

The protein belongs to the dUTPase family. Mg(2+) serves as cofactor.

It carries out the reaction dUTP + H2O = dUMP + diphosphate + H(+). It participates in pyrimidine metabolism; dUMP biosynthesis; dUMP from dCTP (dUTP route): step 2/2. This enzyme is involved in nucleotide metabolism: it produces dUMP, the immediate precursor of thymidine nucleotides and it decreases the intracellular concentration of dUTP so that uracil cannot be incorporated into DNA. The polypeptide is Deoxyuridine 5'-triphosphate nucleotidohydrolase (Shewanella piezotolerans (strain WP3 / JCM 13877)).